Reading from the N-terminus, the 351-residue chain is Ubiquinol oxidase 4, chloroplastic/chromoplastic (351 aa).

The N-terminal 56 residues, 1-56 (MAAISGISSGTLTISRPLVTLRRSRAAVSYSSSHRLLHHLPLSSRRLLLRNNHRVQ), are a transit peptide targeting the chloroplast and chromoplast. Positions 71 to 91 (ESFKAETSTGTEPLEEPNMSS) are disordered. The chain crosses the membrane as a helical span at residues 132-152 (FFVLETIARVPYFAFMSVLHM). Positions 136, 175, and 178 each coordinate Fe cation. Residues 195–215 (FLAQHIATFYYFMTVFLYILS) form a helical membrane-spanning segment. Glu227, Glu296, and His299 together coordinate Fe cation.

The protein belongs to the alternative oxidase family. The cofactor is Fe cation. In terms of tissue distribution, ubiquitous.

Its subcellular location is the plastid. It localises to the chloroplast thylakoid membrane. The protein resides in the chromoplast membrane. It catalyses the reaction 2 a ubiquinol + O2 = 2 a ubiquinone + 2 H2O. Its function is as follows. Acts early in chloroplast biogenesis as a component of a redox chain responsible for phytoene desaturation. Prevents the generation of toxic oxygen radicals and photooxidation of the nascent photosynthetic apparatus. Involved in the differentiation of multiple plastid types, including chloroplasts, amyloplasts, and etioplasts. Might participate in the chloroplast respiratory chain. This is Ubiquinol oxidase 4, chloroplastic/chromoplastic (AOX4) from Arabidopsis thaliana (Mouse-ear cress).